Here is a 241-residue protein sequence, read N- to C-terminus: 2-C-methyl-D-erythritol 4-phosphate cytidylyltransferase (241 aa).

The protein belongs to the IspD/TarI cytidylyltransferase family. IspD subfamily.

The catalysed reaction is 2-C-methyl-D-erythritol 4-phosphate + CTP + H(+) = 4-CDP-2-C-methyl-D-erythritol + diphosphate. The protein operates within isoprenoid biosynthesis; isopentenyl diphosphate biosynthesis via DXP pathway; isopentenyl diphosphate from 1-deoxy-D-xylulose 5-phosphate: step 2/6. Functionally, catalyzes the formation of 4-diphosphocytidyl-2-C-methyl-D-erythritol from CTP and 2-C-methyl-D-erythritol 4-phosphate (MEP). The sequence is that of 2-C-methyl-D-erythritol 4-phosphate cytidylyltransferase from Alkaliphilus metalliredigens (strain QYMF).